The primary structure comprises 184 residues: QLLQFAADVATGMHYLSDKQFIHRDLAARNVLVGDNLVAKIADFGLSRGEEVYVKKTMGRLPVRWMAIESLNYSVYTTKSDVWSFGVLLWEIVSLGGTPYCGMTCAELYEKLPQGYRMEQPRNCDDEVYELMRQCWRDRPYERPPFSQISVQLNRMQEARKAYVNMALFENFTYAGIDATAEEA.

Positions 1-164 constitute a Protein kinase domain; the sequence is QLLQFAADVA…RMQEARKAYV (164 aa). The Proton acceptor role is filled by D25. Y53 carries the post-translational modification Phosphotyrosine; by autocatalysis.

It belongs to the protein kinase superfamily. Tyr protein kinase family. Tie subfamily. Interacts with svep1. Expressed in most populations of endothelial cells in 24 hours embryos, including the endocardium.

It localises to the cell membrane. It carries out the reaction L-tyrosyl-[protein] + ATP = O-phospho-L-tyrosyl-[protein] + ADP + H(+). Functionally, transmembrane tyrosine-protein kinase. Required for the formation of facial lymphatic structures and brain lymphatic endothelial cells. Also required for embryonic ventral and dorsal migration of parachordal lymphoblasts along the arterial intersegmental vessel. Plays a role in the embryonic formation of the dorsal longitudinal anastomotic vessel. In Danio rerio (Zebrafish), this protein is Tyrosine-protein kinase receptor Tie-1 (tie1).